Here is a 101-residue protein sequence, read N- to C-terminus: Putative membrane protein insertion efficiency factor (101 aa).

This sequence belongs to the UPF0161 family.

The protein localises to the cell inner membrane. In terms of biological role, could be involved in insertion of integral membrane proteins into the membrane. The protein is Putative membrane protein insertion efficiency factor of Methylobacterium sp. (strain 4-46).